The following is a 926-amino-acid chain: Alpha-aminoadipic semialdehyde synthase, mitochondrial (926 aa).

The transit peptide at 1–27 (MLRVSRTKLGRLSPSLSRGLHHKAVMA) directs the protein to the mitochondrion. The lysine-ketoglutarate reductase stretch occupies residues 28–455 (LRREDVNAWE…DAVIASNGML (428 aa)). Lysine 48 and lysine 56 each carry N6-acetyllysine. At lysine 93 the chain carries N6-acetyllysine; alternate. Lysine 93 is subject to N6-succinyllysine; alternate. Position 128 is an N6-acetyllysine (lysine 128). An N6-acetyllysine; alternate modification is found at lysine 138. Lysine 138 carries the post-translational modification N6-succinyllysine; alternate. Lysine 274 carries the post-translational modification N6-succinyllysine. Lysine 286 is subject to N6-acetyllysine; alternate. Lysine 286 is subject to N6-succinyllysine; alternate. Lysine 333 carries the N6-succinyllysine modification. Lysine 458 is subject to N6-acetyllysine; alternate. At lysine 458 the chain carries N6-succinyllysine; alternate. Residues 477–926 (MGTKKKVLVL…MYTTQSTIKL (450 aa)) form a saccharopine dehydrogenase region. NAD(+) contacts are provided by serine 488, aspartate 512, and glutamine 516. N6-acetyllysine; alternate is present on residues lysine 523 and lysine 535. An N6-succinyllysine; alternate mark is found at lysine 523 and lysine 535. The NAD(+) site is built by leucine 554, alanine 576, and serine 577. 577–578 (SY) provides a ligand contact to L-saccharopine. Lysine 584 is modified (N6-acetyllysine; alternate). Lysine 584 carries the N6-succinyllysine; alternate modification. Residues leucine 603, aspartate 604, and proline 605 each coordinate NAD(+). Aspartate 604 is a binding site for L-saccharopine. Arginine 703 contacts L-saccharopine. Lysine 707 bears the N6-acetyllysine mark. Position 724–726 (724–726 (TLR)) interacts with L-saccharopine. Lysine 732 is modified (N6-succinyllysine). Residue lysine 739 is modified to N6-acetyllysine. The residue at position 761 (lysine 761) is an N6-acetyllysine; alternate. Lysine 761 bears the N6-succinyllysine; alternate mark. An N6-acetyllysine modification is found at lysine 780.

It in the N-terminal section; belongs to the AlaDH/PNT family. In the C-terminal section; belongs to the saccharopine dehydrogenase family. As to quaternary structure, homotetramer.

Its subcellular location is the mitochondrion. The catalysed reaction is L-saccharopine + NADP(+) + H2O = L-lysine + 2-oxoglutarate + NADPH + H(+). It catalyses the reaction L-saccharopine + NAD(+) + H2O = (S)-2-amino-6-oxohexanoate + L-glutamate + NADH + H(+). Its pathway is amino-acid degradation; L-lysine degradation via saccharopine pathway; glutaryl-CoA from L-lysine: step 1/6. The protein operates within amino-acid degradation; L-lysine degradation via saccharopine pathway; glutaryl-CoA from L-lysine: step 2/6. Bifunctional enzyme that catalyzes the first two steps in lysine degradation. The chain is Alpha-aminoadipic semialdehyde synthase, mitochondrial from Bos taurus (Bovine).